We begin with the raw amino-acid sequence, 988 residues long: GVSSRARRPPGSSRSSRRGVTSELAWTTHPETGWEEVSGYDEAMNPIRTYQVCNVREANQNNWLRTKFIQRQDVQRVYVELKFTVRDCNSIPNIPGSCKETFNLFYYESDTDSASANSPFWMENPYIKVDTIAPDESFSKLESGRVNTKVRSFGPLSKNGFYLAFQDLGACMSLISVRAFYKKCSNTIAGFAIFPETLTGAEPTSLVIAPGTCIPNAVEVSVPLKLYCNGDGEWMVPVGACTCAAGYEPAMKDTQCQACGPGTFKSKQGEGPCSPCPPNSRTTAGAATVCICRSGFFRADADPADSACTSVPSAPRSVISNVNETSLVLEWSEPQDAGGRDDLLYNVICKKCSVERRLCSRCDDNVEFVPRQLGLTGLTERRIYISKVMAHPQYTFEIQAVNGISSKSPYPPHFASVNITTNQAAPSAVPTMHLHSSTGNSMTLSWTPPERPNGIILDYEIKYSEKQGQGDGIANTVTSQKNSVRLDGLKANARYMVQVRARTVAGYGRYSLPTEFQTTAEDGSTSKTFQELPLIVGSATAGLLFVIVVVIIAIVCFRKGMVTEQLLSSPLGRKQRNSTDPEYTEKLQQYVTPGMKVYIDPFTYEDPNEAVREFAKEIDISCVKIEEVIGAGEFGEVCRGRLKLPGRREIFVAIKTLKVGYTERQRRDFLSEASIMGQFDHPNIIHLEGVVTKSRPVMIITEFMENCALDSFLRLNDGQFTVIQLVGMLRGIAAGMKYLSEMNYVHRDLAARNILVNSNLVCKVSDFGLSRFLEDDPADPTYTSSLGGKIPIRWTAPEAIAYRKFTSASDVWSYGIVMWEVMSYGERPYWDMSNQDVINAVEQDYRLPPPMDCPTALHQLMLDCWVRDRNLRPKFAQIVNTLDKLIRNAASLKVIASVQSGVSQPLLDRTVPDYTTFTTVGDWLDAIKMGRYKENFVNAGFASFDLVAQMTAEDLLRIGVTLAGHQKKILSSIQDMRLQMNQTLPVQV.

Residues 1–24 form a disordered region; sequence GVSSRARRPPGSSRSSRRGVTSEL. The Extracellular portion of the chain corresponds to 1-534; the sequence is GVSSRARRPP…TSKTFQELPL (534 aa). One can recognise an Eph LBD domain in the interval 11-189; it reads GSSRSSRRGV…FYKKCSNTIA (179 aa). Cys-53 and Cys-171 are disulfide-bonded. Fibronectin type-III domains are found at residues 311 to 424 and 425 to 522; these read VPSA…TNQA and APSA…TAED. 2 N-linked (GlcNAc...) asparagine glycosylation sites follow: Asn-323 and Asn-418. The chain crosses the membrane as a helical span at residues 535–555; it reads IVGSATAGLLFVIVVVIIAIV. Over 556-988 the chain is Cytoplasmic; it reads CFRKGMVTEQ…QMNQTLPVQV (433 aa). The residue at position 604 (Tyr-604) is a Phosphotyrosine; by autocatalysis. A Protein kinase domain is found at 623 to 886; it reads VKIEEVIGAG…QIVNTLDKLI (264 aa). Residues 629 to 637 and Lys-655 each bind ATP; that span reads IGAGEFGEV. Asp-748 functions as the Proton acceptor in the catalytic mechanism. Residues 915–979 form the SAM domain; that stretch reads TTFTTVGDWL…LSSIQDMRLQ (65 aa). Residues 986 to 988 carry the PDZ-binding motif; it reads VQV.

It belongs to the protein kinase superfamily. Tyr protein kinase family. Ephrin receptor subfamily. Heterotetramer upon binding of the ligand. The heterotetramer is composed of an ephrin dimer and a receptor dimer. Oligomerization is probably required to induce biological responses. In terms of processing, phosphorylated. Autophosphorylates upon ligand-binding. Autophosphorylation on Tyr-604 is required for interaction with SH2 domain-containing proteins. Present in 10-day embryonic brain and body tissues. Prominent expression in kidney. Lower expression in lung, and barely detectable in brain, liver, heart, skeletal muscle and thymus.

It localises to the cell membrane. The protein localises to the cell projection. Its subcellular location is the dendrite. It carries out the reaction L-tyrosyl-[protein] + ATP = O-phospho-L-tyrosyl-[protein] + ADP + H(+). Its function is as follows. Receptor tyrosine kinase which binds promiscuously transmembrane ephrin-B family ligands residing on adjacent cells, leading to contact-dependent bidirectional signaling into neighboring cells. The signaling pathway downstream of the receptor is referred to as forward signaling while the signaling pathway downstream of the ephrin ligand is referred to as reverse signaling. Generally has an overlapping and redundant function with EPHB2. Like EPHB2, functions in axon guidance during development. In addition to its role in axon guidance also plays an important redundant role with other ephrin-B receptors in development and maturation of dendritic spines and the formation of excitatory synapses. May control other aspects of development through regulation of cell migration and positioning. This is Ephrin type-B receptor 3 (EPHB3) from Gallus gallus (Chicken).